The chain runs to 383 residues: 3-dehydroquinate synthase (383 aa).

NAD(+) is bound by residues 81–86 (EGEVSK), 115–119 (GVVGD), 139–140 (TS), Lys-152, and Lys-161. 3 residues coordinate Zn(2+): Glu-194, His-256, and His-274.

It belongs to the sugar phosphate cyclases superfamily. Dehydroquinate synthase family. Co(2+) serves as cofactor. The cofactor is Zn(2+). Requires NAD(+) as cofactor.

The protein resides in the cytoplasm. It catalyses the reaction 7-phospho-2-dehydro-3-deoxy-D-arabino-heptonate = 3-dehydroquinate + phosphate. The protein operates within metabolic intermediate biosynthesis; chorismate biosynthesis; chorismate from D-erythrose 4-phosphate and phosphoenolpyruvate: step 2/7. Catalyzes the conversion of 3-deoxy-D-arabino-heptulosonate 7-phosphate (DAHP) to dehydroquinate (DHQ). The sequence is that of 3-dehydroquinate synthase from Nitrobacter hamburgensis (strain DSM 10229 / NCIMB 13809 / X14).